The following is a 111-amino-acid chain: MNAHKERLESNLLELLQEALASLNDSELNSLSVTKVECSKGKHHALVFVLSSDHKILSKLKKAEGLIRQFVLQASGWFKCPKLSFVLDDSLEKQLRLDAIFNEIAKGKDND.

Belongs to the RbfA family. In terms of assembly, monomer. Binds 30S ribosomal subunits, but not 50S ribosomal subunits or 70S ribosomes.

The protein resides in the cytoplasm. Functionally, one of several proteins that assist in the late maturation steps of the functional core of the 30S ribosomal subunit. Associates with free 30S ribosomal subunits (but not with 30S subunits that are part of 70S ribosomes or polysomes). Required for efficient processing of 16S rRNA. May interact with the 5'-terminal helix region of 16S rRNA. In Helicobacter pylori (strain J99 / ATCC 700824) (Campylobacter pylori J99), this protein is Ribosome-binding factor A.